The following is an 88-amino-acid chain: Small ribosomal subunit protein bS20 (88 aa).

The segment at 1-27 (MANSKSAKKRALQSEKRRQHNASRRSM) is disordered.

The protein belongs to the bacterial ribosomal protein bS20 family.

Functionally, binds directly to 16S ribosomal RNA. In Shewanella putrefaciens (strain CN-32 / ATCC BAA-453), this protein is Small ribosomal subunit protein bS20.